Here is a 384-residue protein sequence, read N- to C-terminus: Guanine nucleotide-binding protein alpha-1 subunit (384 aa).

Gly-2 carries the N-myristoyl glycine lipid modification. Residue Cys-5 is the site of S-palmitoyl cysteine attachment. The G-alpha domain occupies 38–384; sequence HIQKLLLLGA…RRNLFEAGLL (347 aa). The segment at 41 to 54 is G1 motif; the sequence is KLLLLGAGESGKST. 14 residues coordinate GTP: Glu-49, Ser-50, Gly-51, Lys-52, Ser-53, Thr-54, Leu-188, Tyr-189, Thr-194, Gly-222, Asn-288, Lys-289, Asp-291, and Ala-356. Ser-53 lines the Mg(2+) pocket. Residues 186 to 194 are G2 motif; it reads DVLYARVRT. Thr-194 is a binding site for Mg(2+). Residues 215–224 form a G3 motif region; the sequence is YRLFDVGGQR. Residues 284 to 291 are G4 motif; that stretch reads MLFLNKFD. Positions 354–359 are G5 motif; that stretch reads TTALDQ.

It belongs to the G-alpha family. G proteins are composed of 3 units; alpha, beta and gamma. The alpha chain contains the guanine nucleotide binding site. The cofactor is Mg(2+).

Guanine nucleotide-binding proteins (G proteins) are involved as modulators or transducers in various transmembrane signaling systems. The chain is Guanine nucleotide-binding protein alpha-1 subunit (GPA1) from Lupinus luteus (European yellow lupine).